We begin with the raw amino-acid sequence, 435 residues long: tRNA modification GTPase MnmE (435 aa).

Residues Arg-24, Glu-82, and Lys-122 each contribute to the (6S)-5-formyl-5,6,7,8-tetrahydrofolate site. A TrmE-type G domain is found at 219-360 (GFIIAIAGPP…LIAEMERRLG (142 aa)). K(+) is bound at residue Asn-229. Residues 229–234 (NAGKST), 248–254 (SPVPGTT), and 273–276 (DTAG) contribute to the GTP site. Residue Ser-233 coordinates Mg(2+). K(+) contacts are provided by Ser-248, Val-250, and Thr-253. Thr-254 is a binding site for Mg(2+). Residue Lys-435 coordinates (6S)-5-formyl-5,6,7,8-tetrahydrofolate.

It belongs to the TRAFAC class TrmE-Era-EngA-EngB-Septin-like GTPase superfamily. TrmE GTPase family. In terms of assembly, homodimer. Heterotetramer of two MnmE and two MnmG subunits. The cofactor is K(+).

It is found in the cytoplasm. In terms of biological role, exhibits a very high intrinsic GTPase hydrolysis rate. Involved in the addition of a carboxymethylaminomethyl (cmnm) group at the wobble position (U34) of certain tRNAs, forming tRNA-cmnm(5)s(2)U34. The protein is tRNA modification GTPase MnmE of Azorhizobium caulinodans (strain ATCC 43989 / DSM 5975 / JCM 20966 / LMG 6465 / NBRC 14845 / NCIMB 13405 / ORS 571).